The sequence spans 333 residues: Ribosomal RNA small subunit methyltransferase H (333 aa).

S-adenosyl-L-methionine-binding positions include 31-33 (GGY), Asp49, Phe76, Asp134, and Gln141.

Belongs to the methyltransferase superfamily. RsmH family.

It is found in the cytoplasm. It catalyses the reaction cytidine(1402) in 16S rRNA + S-adenosyl-L-methionine = N(4)-methylcytidine(1402) in 16S rRNA + S-adenosyl-L-homocysteine + H(+). Functionally, specifically methylates the N4 position of cytidine in position 1402 (C1402) of 16S rRNA. The sequence is that of Ribosomal RNA small subunit methyltransferase H from Wolbachia sp. subsp. Brugia malayi (strain TRS).